A 351-amino-acid polypeptide reads, in one-letter code: UDP-3-O-acylglucosamine N-acyltransferase (351 aa).

His-240 (proton acceptor) is an active-site residue.

The protein belongs to the transferase hexapeptide repeat family. LpxD subfamily. As to quaternary structure, homotrimer.

It carries out the reaction a UDP-3-O-[(3R)-3-hydroxyacyl]-alpha-D-glucosamine + a (3R)-hydroxyacyl-[ACP] = a UDP-2-N,3-O-bis[(3R)-3-hydroxyacyl]-alpha-D-glucosamine + holo-[ACP] + H(+). It functions in the pathway bacterial outer membrane biogenesis; LPS lipid A biosynthesis. Its function is as follows. Catalyzes the N-acylation of UDP-3-O-acylglucosamine using 3-hydroxyacyl-ACP as the acyl donor. Is involved in the biosynthesis of lipid A, a phosphorylated glycolipid that anchors the lipopolysaccharide to the outer membrane of the cell. This chain is UDP-3-O-acylglucosamine N-acyltransferase, found in Pseudomonas savastanoi pv. phaseolicola (strain 1448A / Race 6) (Pseudomonas syringae pv. phaseolicola (strain 1448A / Race 6)).